We begin with the raw amino-acid sequence, 440 residues long: Glyceraldehyde-3-phosphate dehydrogenase, testis-specific (440 aa).

The testis-specific N-terminal extension stretch occupies residues M1–A105. Pro residues-rich tracts occupy residues P40–I75 and A83–Q102. A disordered region spans residues P40–R106. NAD(+) contacts are provided by residues R117–I118, D138, K183, Y205, and T225. D-glyceraldehyde 3-phosphate contacts are provided by residues S255–T257, T286, T315–G316, and R338. C256 (nucleophile) is an active-site residue. At S358 the chain carries Phosphoserine. N420 is a binding site for NAD(+).

This sequence belongs to the glyceraldehyde-3-phosphate dehydrogenase family. In terms of assembly, homotetramer. Testis specific.

The protein resides in the cytoplasm. The catalysed reaction is D-glyceraldehyde 3-phosphate + phosphate + NAD(+) = (2R)-3-phospho-glyceroyl phosphate + NADH + H(+). It participates in carbohydrate degradation; glycolysis; pyruvate from D-glyceraldehyde 3-phosphate: step 1/5. Its function is as follows. May play an important role in regulating the switch between different pathways for energy production during spermiogenesis and in the spermatozoon. Required for sperm motility and male fertility. The protein is Glyceraldehyde-3-phosphate dehydrogenase, testis-specific (Gapdhs) of Mus musculus (Mouse).